The sequence spans 859 residues: Auxin response factor 2 (859 aa).

Residues 1–48 (MASSEVSMKGNRGGDNFSSSGFSDPKETRNVSVAGEGQKSNSTRSAAA) are disordered. A compositionally biased stretch (low complexity) spans 14 to 23 (GDNFSSSGFS). A DNA-binding region (TF-B3) is located at residues 164 to 266 (FCKTLTASDT…ELRVGVRRAM (103 aa)). The segment covering 396–407 (LAPPALSPVPMP) has biased composition (pro residues). Disordered regions lie at residues 396 to 442 (LAPP…LPAS), 687 to 736 (IASP…RSCT), and 829 to 859 (RSEE…AGNS). 2 stretches are compositionally biased toward polar residues: residues 416–426 (IAPSSPDSSML) and 695–704 (LSDQSKGSKS). Positions 733–817 (RSCTKVHKQG…RKIFIYTKEE (85 aa)) constitute a PB1 domain. Polar residues predominate over residues 847–859 (SASNPSLSSAGNS).

This sequence belongs to the ARF family. In terms of assembly, homodimers and heterodimers. Interacts with ARF1. As to expression, expressed in the whole plant.

It localises to the nucleus. In terms of biological role, auxin response factors (ARFs) are transcriptional factors that bind specifically to the DNA sequence 5'-TGTCTC-3' found in the auxin-responsive promoter elements (AuxREs). Could act as transcriptional activator or repressor. Formation of heterodimers with Aux/IAA proteins may alter their ability to modulate early auxin response genes expression. Promotes flowering, stamen development, floral organ abscission and fruit dehiscence. Functions independently of ethylene and cytokinin response pathways. May act as a repressor of cell division and organ growth. In Arabidopsis thaliana (Mouse-ear cress), this protein is Auxin response factor 2 (ARF2).